A 109-amino-acid polypeptide reads, in one-letter code: UPF0060 membrane protein YfjF (109 aa).

4 consecutive transmembrane segments (helical) span residues 6-26 (ILLFLAAGLAEIGGGYLVWLW), 32-52 (PAGYGIAGALILIVYGILPTF), 61-81 (VYAAYGGVFIVLAVLWGWLVD), and 87-107 (LYDWIGAFICLIGVCVILFAP).

It belongs to the UPF0060 family.

Its subcellular location is the cell membrane. The polypeptide is UPF0060 membrane protein YfjF (yfjF) (Bacillus subtilis (strain 168)).